Consider the following 843-residue polypeptide: Major vault protein alpha (843 aa).

The residue at position 2 (Ala2) is an N-acetylalanine. 9 MVP repeats span residues 2–56, 57–111, 112–163, 164–216, 217–272, 273–324, 325–376, 377–442, and 443–505; these read ADLN…IPQR, NYCT…KVTA, LQVV…EEIK, ATII…EIVN, AYVL…GEVH, ITTL…IHNI, YVLT…KRES, IPLD…STRV, and VTYR…FLGP. A disordered region spans residues 643–663; that stretch reads QEAAARHEAERLEQGARGRLE. A compositionally biased stretch (basic and acidic residues) spans 646-663; that stretch reads AARHEAERLEQGARGRLE.

The vault ribonucleoprotein particle is a huge (400 A x 670 A) cage structure of 12.9 MDa. It consists of a dimer of half-vaults, with each half-vault comprising 39 identical major vault protein (MVP) chains. Dictyostelium is one of the few organisms in which the major component is actually two proteins (alpha and beta).

Its subcellular location is the cytoplasm. It is found in the nucleus. Unknown, though MVP-alpha is required for normal vault structure. The polypeptide is Major vault protein alpha (mvpA) (Dictyostelium discoideum (Social amoeba)).